A 340-amino-acid chain; its full sequence is Protein-tyrosine-phosphatase PTP1 (340 aa).

Residues 58–326 (IAHEFTGLQA…FFCYNAIVDE (269 aa)) enclose the Tyrosine-protein phosphatase domain. Substrate contacts are provided by residues Asp234, 265–271 (CSAGIGR), and Gln311. Catalysis depends on Cys265, which acts as the Phosphocysteine intermediate.

As to quaternary structure, interacts with MPK6. Interacts with KIN10. In terms of processing, phosphorylated by KIN10. Expressed in roots, stems and flowers, and at low levels in leaves.

Its subcellular location is the cytoplasm. The protein localises to the cytosol. It localises to the nucleus. It carries out the reaction O-phospho-L-tyrosyl-[protein] + H2O = L-tyrosyl-[protein] + phosphate. Inhibited by hydrogen peroxide. Its function is as follows. Protein-tyrosine-phosphatase that dephosphorylates and probably inhibits MPK6 in non-oxidative stress conditions. In association with MKP1, represses salicylic acid (SA) and camalexin biosynthesis, thus modulating defense response. May also repress MPK3. Dephosphorylates and inactivates MPK4 in vitro. The sequence is that of Protein-tyrosine-phosphatase PTP1 (PTP1) from Arabidopsis thaliana (Mouse-ear cress).